A 679-amino-acid chain; its full sequence is SAGMIIMLIPTVMAFHLTTRNGEPHMIVSRQEKGKSLLFKTEDGVNMCTLMAMDLGELCEDTITYKCPLLRQNEPEDIDCWCNSTSTWVTYGTCTTTGEHRREKRSVALVPHVGMGLETRTETWMSSEGAWKHAQRIEIWILRHPGFTIMAAILAYTIGTTHFQRALIFILLTAVAPSMTMRCIGISNRDFVEGVSGGSWVDIVLEHGSCVTTMAKNKPTLDFELIKTEAKQPATLRKYCIEAKLTNTTTESRCPTQGEPSLNEEQDKRFVCKHSMVDRGWGNGCGLFGKGGIVTCAMFTCKKNMEGKVVQPENLEYTIVVTPHSGEEHAVGNDTGKHGKEIKVTPQSSITEAELTGYGTVTMECSPRTGLDFNEMVLLQMENKAWLVHRQWFLDLPLPWLPGADTQGSNWIQKETLVTFKNPHAKKQDVVVLGSQEGAMHTALTGATEIQMSSGNLLFTGHLKCRLRMDKLQLKGMSYSMCTGKFKVVKEIAETQHGTIVIRVQYEGDGSPCKIPFEIMDLEKRHVLGRLITVNPIVTEKDSPVNIEAEPPFGDSYIIIGVEPGQLKLNWFKKGSSIGQMFETTMRGAKRMAILGDTAWDFGSLGGVFTSIGKALHQVFGAIYGAAFSGVSWTMKILIGVIITWIGMNSRSTSLSVSLVLVGIVTLYLGVMVQADSGC.

Residues 1-14 (SAGMIIMLIPTVMA) constitute a propeptide, ER anchor for the capsid protein C, removed in mature form by serine protease NS3. A helical membrane pass occupies residues 2-22 (AGMIIMLIPTVMAFHLTTRNG). The Extracellular portion of the chain corresponds to 23-138 (EPHMIVSRQE…GAWKHAQRIE (116 aa)). Asn83 is a glycosylation site (N-linked (GlcNAc...) asparagine; by host). The chain crosses the membrane as a helical span at residues 139 to 159 (IWILRHPGFTIMAAILAYTIG). The Cytoplasmic portion of the chain corresponds to 160–165 (TTHFQR). Residues 166–180 (ALIFILLTAVAPSMT) form a helical membrane-spanning segment. The Extracellular segment spans residues 181-625 (MRCIGISNRD…LHQVFGAIYG (445 aa)). 4 cysteine pairs are disulfide-bonded: Cys183–Cys210, Cys240–Cys301, Cys254–Cys285, and Cys272–Cys296. N-linked (GlcNAc...) asparagine; by host glycosylation is present at Asn247. The interval 278-291 (DRGWGNGCGLFGKG) is fusion peptide. The N-linked (GlcNAc...) asparagine; by host glycan is linked to Asn333. Intrachain disulfides connect Cys365-Cys465 and Cys482-Cys513. A helical membrane pass occupies residues 626-646 (AAFSGVSWTMKILIGVIITWI). Topologically, residues 647 to 652 (GMNSRS) are cytoplasmic. A helical transmembrane segment spans residues 653–673 (TSLSVSLVLVGIVTLYLGVMV). Topologically, residues 674–679 (QADSGC) are extracellular.

As to quaternary structure, forms heterodimers with envelope protein E in the endoplasmic reticulum and Golgi. In terms of assembly, homodimer; in the endoplasmic reticulum and Golgi. Interacts with protein prM. Interacts with non-structural protein 1. Cleaved in post-Golgi vesicles by a host furin, releasing the mature small envelope protein M, and peptide pr. This cleavage is incomplete as up to 30% of viral particles still carry uncleaved prM. In terms of processing, N-glycosylated. Post-translationally, N-glycosylated. The excreted form is glycosylated and this is required for efficient secretion of the protein from infected cells. Specific enzymatic cleavages in vivo yield mature proteins. Cleavages in the lumen of endoplasmic reticulum are performed by host signal peptidase, wereas cleavages in the cytoplasmic side are performed by serine protease NS3. Signal cleavage at the 2K-4B site requires a prior NS3 protease-mediated cleavage at the 4A-2K site.

The protein localises to the secreted. Its subcellular location is the virion membrane. It is found in the host endoplasmic reticulum membrane. In terms of biological role, prevents premature fusion activity of envelope proteins in trans-Golgi by binding to envelope protein E at pH6.0. After virion release in extracellular space, gets dissociated from E dimers. Acts as a chaperone for envelope protein E during intracellular virion assembly by masking and inactivating envelope protein E fusion peptide. prM is the only viral peptide matured by host furin in the trans-Golgi network probably to avoid catastrophic activation of the viral fusion activity in acidic Golgi compartment prior to virion release. prM-E cleavage is inefficient, and many virions are only partially matured. These uncleaved prM would play a role in immune evasion. Its function is as follows. May play a role in virus budding. Exerts cytotoxic effects by activating a mitochondrial apoptotic pathway through M ectodomain. May display a viroporin activity. Functionally, binds to host cell surface receptor and mediates fusion between viral and cellular membranes. Envelope protein is synthesized in the endoplasmic reticulum in the form of heterodimer with protein prM. They play a role in virion budding in the ER, and the newly formed immature particle is covered with 60 spikes composed of heterodimer between precursor prM and envelope protein E. The virion is transported to the Golgi apparatus where the low pH causes dissociation of PrM-E heterodimers and formation of E homodimers. prM-E cleavage is inefficient, and many virions are only partially matured. These uncleaved prM would play a role in immune evasion. In terms of biological role, involved in immune evasion, pathogenesis and viral replication. Once cleaved off the polyprotein, is targeted to three destinations: the viral replication cycle, the plasma membrane and the extracellular compartment. Essential for viral replication. Required for formation of the replication complex and recruitment of other non-structural proteins to the ER-derived membrane structures. Excreted as a hexameric lipoparticle that plays a role against host immune response. Antagonizing the complement function. Binds to the host macrophages and dendritic cells. Inhibits signal transduction originating from Toll-like receptor 3 (TLR3). Disrupts the host endothelial glycocalyx layer of host pulmonary microvascular endothelial cells, inducing degradation of sialic acid and shedding of heparan sulfate proteoglycans. NS1 induces expression of sialidases, heparanase, and activates cathepsin L, which activates heparanase via enzymatic cleavage. These effects are probably linked to the endothelial hyperpermeability observed in severe dengue disease. The protein is Genome polyprotein of Dengue virus type 2 (strain Thailand/PUO-218/1980) (DENV-2).